The chain runs to 688 residues: NADH-ubiquinone oxidoreductase 75 kDa subunit (688 aa).

The region spanning 1-85 is the 2Fe-2S ferredoxin-type domain; that stretch reads MIIRFKINEI…DESIETEIDE (85 aa). 4 residues coordinate [2Fe-2S] cluster: Cys-38, Cys-49, Cys-52, and Cys-66. One can recognise a 4Fe-4S His(Cys)3-ligated-type domain in the interval 85 to 124; the sequence is EILKAREGVMEFLLINHPLDCPICDQGGECDLQEQTLAYG. [4Fe-4S] cluster-binding residues include His-101, Cys-105, Cys-108, Cys-114, Cys-153, Cys-156, Cys-159, and Cys-204. The 4Fe-4S Mo/W bis-MGD-type domain maps to 223–279; it reads LKNIKGIDIFDTLLTPINYQVKGGEIFRILPRINDRINEEWITDKVRFHYESYKIIE.

Belongs to the complex I 75 kDa subunit family. Complex I is composed of about 45 different subunits. It depends on [2Fe-2S] cluster as a cofactor. [4Fe-4S] cluster serves as cofactor.

Its subcellular location is the mitochondrion inner membrane. The enzyme catalyses a ubiquinone + NADH + 5 H(+)(in) = a ubiquinol + NAD(+) + 4 H(+)(out). Core subunit of the mitochondrial membrane respiratory chain NADH dehydrogenase (Complex I) that is believed to belong to the minimal assembly required for catalysis. Complex I functions in the transfer of electrons from NADH to the respiratory chain. The immediate electron acceptor for the enzyme is believed to be ubiquinone. This is the largest subunit of complex I and it is a component of the iron-sulfur (IP) fragment of the enzyme. It may form part of the active site crevice where NADH is oxidized. This chain is NADH-ubiquinone oxidoreductase 75 kDa subunit (nad11), found in Dictyostelium discoideum (Social amoeba).